We begin with the raw amino-acid sequence, 673 residues long: UvrABC system protein B (673 aa).

Residues 26 to 183 (EGLEDGLAHQ…RRLAELQYTR (158 aa)) form the Helicase ATP-binding domain. 39–46 (GVTGSGKT) provides a ligand contact to ATP. The Beta-hairpin motif lies at 92 to 115 (YYDYYQPEAYVPSSDTFIEKDASV). In terms of domain architecture, Helicase C-terminal spans 431–597 (QVDDLLSEIR…GLNKKVVDIL (167 aa)). The UVR domain maps to 633 to 668 (QQKIHELEGQMMQHAQNLEFEEAAQIRDQLHQLREL).

Belongs to the UvrB family. In terms of assembly, forms a heterotetramer with UvrA during the search for lesions. Interacts with UvrC in an incision complex.

It is found in the cytoplasm. Its function is as follows. The UvrABC repair system catalyzes the recognition and processing of DNA lesions. A damage recognition complex composed of 2 UvrA and 2 UvrB subunits scans DNA for abnormalities. Upon binding of the UvrA(2)B(2) complex to a putative damaged site, the DNA wraps around one UvrB monomer. DNA wrap is dependent on ATP binding by UvrB and probably causes local melting of the DNA helix, facilitating insertion of UvrB beta-hairpin between the DNA strands. Then UvrB probes one DNA strand for the presence of a lesion. If a lesion is found the UvrA subunits dissociate and the UvrB-DNA preincision complex is formed. This complex is subsequently bound by UvrC and the second UvrB is released. If no lesion is found, the DNA wraps around the other UvrB subunit that will check the other stand for damage. This chain is UvrABC system protein B, found in Klebsiella pneumoniae (strain 342).